The primary structure comprises 138 residues: Large ribosomal subunit protein uL16 (138 aa).

Basic residues predominate over residues 1-17 (MLIPRKVKHRKQHHPRQ). The tract at residues 1-24 (MLIPRKVKHRKQHHPRQRGIASGG) is disordered.

Belongs to the universal ribosomal protein uL16 family. In terms of assembly, part of the 50S ribosomal subunit.

Binds 23S rRNA and is also seen to make contacts with the A and possibly P site tRNAs. The polypeptide is Large ribosomal subunit protein uL16 (Mycolicibacterium gilvum (strain PYR-GCK) (Mycobacterium gilvum (strain PYR-GCK))).